The primary structure comprises 98 residues: NADH-ubiquinone oxidoreductase chain 4L (98 aa).

3 consecutive transmembrane segments (helical) span residues 1 to 21 (MSLV…GLLM), 29 to 49 (SLLC…LTIL), and 61 to 81 (IILL…LVMV).

Belongs to the complex I subunit 4L family. In terms of assembly, core subunit of respiratory chain NADH dehydrogenase (Complex I) which is composed of 45 different subunits.

It localises to the mitochondrion inner membrane. It carries out the reaction a ubiquinone + NADH + 5 H(+)(in) = a ubiquinol + NAD(+) + 4 H(+)(out). Core subunit of the mitochondrial membrane respiratory chain NADH dehydrogenase (Complex I) which catalyzes electron transfer from NADH through the respiratory chain, using ubiquinone as an electron acceptor. Part of the enzyme membrane arm which is embedded in the lipid bilayer and involved in proton translocation. This Muntiacus feae (Fea's muntjac) protein is NADH-ubiquinone oxidoreductase chain 4L (MT-ND4L).